The primary structure comprises 311 residues: Delta-1-pyrroline-5-carboxylate reductase kk1I (311 aa).

Residues 1–31 (MTKRESNTLAVLGCGMVFLVSLLDLANRLLG) form the signal peptide. N59 is a glycosylation site (N-linked (GlcNAc...) asparagine).

The protein belongs to the pyrroline-5-carboxylate reductase family.

Its pathway is secondary metabolite biosynthesis. Functionally, delta-1-pyrroline-5-carboxylate reductase; part of the gene cluster that mediates the biosynthesis of KK-1, a novel cyclic depsipeptide with 10 residues which is a promising active compound with high activity against many plant pathogens, especially Botrytis cinerea. Within the pathway, kk1I catalyzes the synthesis of the L-pipecolic acid residue of KK-1 from delta-1-pyrroline-5-carboxylate (P5C), a metabolic intermediate of lysine. The nonribosomal peptide synthetase (NRPS) kk1B catalyzes the elongation and cyclization of the decapeptide chain composed of 1 D-lactic acid residue (D-Lac), 1 pipecolic acid residue (Pip), 1 aspartic acid residue (Asp), 1 isoleucine residue (Ile), 1 glycine residue (Gly), 1 tyrosine residue (Tyr) and 4 valine residues (Val). The Asp, Ile and 3 Val residues are N-methylated by the 5 methyltransferase domains from the NRPS (found in modules 3, 5, 6, 7 and 9), whereas the Tyr residue is O-methylated by the cluster encoded O-methyltransferase kk1A. The thioesterase kk1J is likely to be involved in the corrective mechanism of peptide chain synthesis. The D-lactate dehydrogenase kk1H is involved in the synthesis of D-lactic acid from pyruvic acid, which is recognized by the A domain of the first kk1B module. The pyrroline-5-carboxylate reductase kk1I is involved in the synthesis of the L-pipecolic acid residue of KK-1 from delta-1-pyrroline-5-carboxylate (P5C), a metabolic intermediate of lysine. It still is unclear how kk1C and kk1D are involved in the production of KK-1. This is Delta-1-pyrroline-5-carboxylate reductase kk1I from Curvularia clavata.